The following is an 822-amino-acid chain: MATVTNFKLVTPPESSRADKPGATKASDAFQEKKSVSVNYDRGEHEVSVNIGGLRKADIPRRYRIRVENDRFQKDWSVSEVVDRLMALNRWEEVDGVLNSWVGRFARKNFPVLIRELSRRGCIELCVNVFKWMKIQKNYCARNDIYNMMIRLHARHNWVDQARGLFFEMQKWSCKPDAETYDALINAHGRAGQWRWAMNLMDDMLRAAIAPSRSTYNNLINACGSSGNWREALEVCKKMTDNGVGPDLVTHNIVLSAYKSGRQYSKALSYFELMKGAKVRPDTTTFNIIIYCLSKLGQSSQALDLFNSMREKRAECRPDVVTFTSIMHLYSVKGEIENCRAVFEAMVAEGLKPNIVSYNALMGAYAVHGMSGTALSVLGDIKQNGIIPDVVSYTCLLNSYGRSRQPGKAKEVFLMMRKERRKPNVVTYNALIDAYGSNGFLAEAVEIFRQMEQDGIKPNVVSVCTLLAACSRSKKKVNVDTVLSAAQSRGINLNTAAYNSAIGSYINAAELEKAIALYQSMRKKKVKADSVTFTILISGSCRMSKYPEAISYLKEMEDLSIPLTKEVYSSVLCAYSKQGQVTEAESIFNQMKMAGCEPDVIAYTSMLHAYNASEKWGKACELFLEMEANGIEPDSIACSALMRAFNKGGQPSNVFVLMDLMREKEIPFTGAVFFEIFSACNTLQEWKRAIDLIQMMDPYLPSLSIGLTNQMLHLFGKSGKVEAMMKLFYKIIASGVGINLKTYAILLEHLLAVGNWRKYIEVLEWMSGAGIQPSNQMYRDIISFGERSAGIEFEPLIRQKLESLRNKGEGLIPTFRHEGTLL.

Positions 1-28 (MATVTNFKLVTPPESSRADKPGATKASD) are disordered. PPR repeat units follow at residues 106-136 (ARKN…MKIQ), 142-176 (RNDI…SCKP), 177-211 (DAET…AIAP), 212-246 (SRST…GVGP), 247-281 (DLVT…KVRP), 282-316 (DTTT…RAEC), 319-353 (DVVT…GLKP), 354-388 (NIVS…GIIP), 389-423 (DVVS…RRKP), 424-458 (NVVT…GIKP), 459-493 (NVVS…GINL), 494-528 (NTAA…KVKA), 529-563 (DSVT…SIPL), 564-598 (TKEV…GCEP), 599-633 (DVIA…GIEP), 634-668 (DSIA…EIPF), 669-699 (TGAV…MDPY), 704-738 (SIGL…GVGI), and 739-773 (NLKT…GIQP).

Belongs to the PPR family. P subfamily.

This is Pentatricopeptide repeat-containing protein At2g41720 (EMB2654) from Arabidopsis thaliana (Mouse-ear cress).